A 305-amino-acid chain; its full sequence is Putative lipid kinase USA300HOU_0749 (305 aa).

Residues 3-139 (NKYTHGVLFY…YDVIKINNQY (137 aa)) form the DAGKc domain. ATP contacts are provided by residues serine 44, 74–80 (GDGTVNE), and threonine 101. Positions 220, 223, and 225 each coordinate Mg(2+). The active-site Proton acceptor is glutamate 281.

The protein belongs to the diacylglycerol/lipid kinase family. Mg(2+) serves as cofactor.

May catalyze the ATP-dependent phosphorylation of lipids other than diacylglycerol (DAG). This is Putative lipid kinase USA300HOU_0749 from Staphylococcus aureus (strain USA300 / TCH1516).